We begin with the raw amino-acid sequence, 303 residues long: Ribonuclease P protein subunit p40 (303 aa).

In terms of assembly, component of nuclear RNase P and RNase MRP ribonucleoproteins. RNase P consists of a catalytic RNA moiety and about 10 protein subunits; POP1, POP4, POP5, POP7, RPP14, RPP21, RPP25, RPP30, RPP38 and RPP40. Within the RNase P complex, POP1, POP7 and RPP25 form the 'finger' subcomplex, POP5, RPP14, RPP40 and homodimeric RPP30 form the 'palm' subcomplex, and RPP21, POP4 and RPP38 form the 'wrist' subcomplex. All subunits of the RNase P complex interact with the catalytic RNA. Several subunits of RNase P are also part of the RNase MRP complex. RNase MRP consists of a catalytic RNA moiety and about 8 protein subunits; POP1, POP7, RPP25, RPP30, RPP38, RPP40 and possibly also POP4 and POP5.

The protein localises to the nucleus. The protein resides in the nucleolus. Its function is as follows. Component of ribonuclease P, a ribonucleoprotein complex that generates mature tRNA molecules by cleaving their 5'-ends. Also a component of the MRP ribonuclease complex, which cleaves pre-rRNA sequences. The polypeptide is Ribonuclease P protein subunit p40 (RPP40) (Bos taurus (Bovine)).